Here is a 376-residue protein sequence, read N- to C-terminus: MASSLKLGLIALLGATAVNAAPAAEPVLGTSLLTSRASCTFSGSSGAAEAIKSKTSCSTITLSNVEVPAGTTLDLTGLKSGTTVIFEGTTTFGYKEWEGPLVSVSGTSITVQGASGAQLNGDGARWWDGKGTNGGKTKPKFFYAHSLTNSKIENIYIKNSPVQVFSINGAKELTLSGITVDTADGDSNGGHNTDAFDVGSSNGVYITSPIVHNQDDCLAVNSGTNVHFTGAQCTGGHGISIGSVGGRSDNTVDGVTVESCTIKDSDNGVRIKTVYGATGTVQGVTYKDITLSGIAKYGIVIEQDYENGSPTGTPTSGVPITDLTLDNVHGTVASSGVDTYILCASGACSDWSWSGVSITGGQTSKKCKGIPSGASC.

An N-terminal signal peptide occupies residues 1-20 (MASSLKLGLIALLGATAVNA). A disulfide bond links Cys39 and Cys57. One copy of the PbH1 1 repeat lies at 170–208 (AKELTLSGITVDTADGDSNGGHNTDAFDVGSSNGVYITS). Asp215 functions as the Proton donor in the catalytic mechanism. Cys217 and Cys233 are disulfide-bonded. PbH1 repeat units lie at residues 223 to 243 (GTNV…SIGS), 252 to 273 (VDGV…RIKT), 281 to 303 (VQGV…VIEQ), and 315 to 360 (TSGV…SITG). The active site involves His237. 2 disulfide bridges follow: Cys343–Cys348 and Cys367–Cys376.

This sequence belongs to the glycosyl hydrolase 28 family.

The protein localises to the secreted. The catalysed reaction is (1,4-alpha-D-galacturonosyl)n+m + H2O = (1,4-alpha-D-galacturonosyl)n + (1,4-alpha-D-galacturonosyl)m.. The chain is Polygalacturonase (PGG1) from Penicillium griseoroseum.